The sequence spans 356 residues: Probable methyltransferase-like protein 15 homolog (356 aa).

Residues 55 to 57 (GGH), D74, F103, D126, and Q133 each bind S-adenosyl-L-methionine.

The protein belongs to the methyltransferase superfamily. RsmH family.

Probable S-adenosyl-L-methionine-dependent methyltransferase. The sequence is that of Probable methyltransferase-like protein 15 homolog from Drosophila melanogaster (Fruit fly).